Reading from the N-terminus, the 913-residue chain is DNA polymerase (913 aa).

The interval 182-401 (PLIIASWDIE…AYARKDTDLP (220 aa)) is contains conserved residues essential for 3' -&gt; 5' exonuclease activities.

Belongs to the DNA polymerase type-B family.

It catalyses the reaction DNA(n) + a 2'-deoxyribonucleoside 5'-triphosphate = DNA(n+1) + diphosphate. In terms of biological role, in addition to polymerase activity, this DNA polymerase potentially exhibits 3' to 5' exonuclease activity. In Chlorella (PBCV-NY2A), this protein is DNA polymerase (DPO).